The chain runs to 884 residues: Alanine--tRNA ligase (884 aa).

His574, His578, Cys675, and His679 together coordinate Zn(2+).

It belongs to the class-II aminoacyl-tRNA synthetase family. The cofactor is Zn(2+).

Its subcellular location is the cytoplasm. The enzyme catalyses tRNA(Ala) + L-alanine + ATP = L-alanyl-tRNA(Ala) + AMP + diphosphate. In terms of biological role, catalyzes the attachment of alanine to tRNA(Ala) in a two-step reaction: alanine is first activated by ATP to form Ala-AMP and then transferred to the acceptor end of tRNA(Ala). Also edits incorrectly charged Ser-tRNA(Ala) and Gly-tRNA(Ala) via its editing domain. The chain is Alanine--tRNA ligase from Ralstonia nicotianae (strain ATCC BAA-1114 / GMI1000) (Ralstonia solanacearum).